The sequence spans 185 residues: Adenine phosphoribosyltransferase (185 aa).

Belongs to the purine/pyrimidine phosphoribosyltransferase family. In terms of assembly, homodimer.

The protein resides in the cytoplasm. It carries out the reaction AMP + diphosphate = 5-phospho-alpha-D-ribose 1-diphosphate + adenine. The protein operates within purine metabolism; AMP biosynthesis via salvage pathway; AMP from adenine: step 1/1. In terms of biological role, catalyzes a salvage reaction resulting in the formation of AMP, that is energically less costly than de novo synthesis. In Shewanella denitrificans (strain OS217 / ATCC BAA-1090 / DSM 15013), this protein is Adenine phosphoribosyltransferase.